Consider the following 282-residue polypeptide: 4-hydroxy-3-methylbut-2-enyl diphosphate reductase (282 aa).

Cys-14 is a [4Fe-4S] cluster binding site. (2E)-4-hydroxy-3-methylbut-2-enyl diphosphate is bound by residues His-43 and His-78. Dimethylallyl diphosphate is bound by residues His-43 and His-78. The isopentenyl diphosphate site is built by His-43 and His-78. Cys-100 contributes to the [4Fe-4S] cluster binding site. A (2E)-4-hydroxy-3-methylbut-2-enyl diphosphate-binding site is contributed by His-128. His-128 is a dimethylallyl diphosphate binding site. His-128 contributes to the isopentenyl diphosphate binding site. Glu-130 functions as the Proton donor in the catalytic mechanism. (2E)-4-hydroxy-3-methylbut-2-enyl diphosphate is bound at residue Thr-164. [4Fe-4S] cluster is bound at residue Cys-192. The (2E)-4-hydroxy-3-methylbut-2-enyl diphosphate site is built by Ser-220, Ser-221, Asn-222, and Ser-266. Positions 220, 221, 222, and 266 each coordinate dimethylallyl diphosphate. Isopentenyl diphosphate is bound by residues Ser-220, Ser-221, Asn-222, and Ser-266.

It belongs to the IspH family. [4Fe-4S] cluster is required as a cofactor.

It catalyses the reaction isopentenyl diphosphate + 2 oxidized [2Fe-2S]-[ferredoxin] + H2O = (2E)-4-hydroxy-3-methylbut-2-enyl diphosphate + 2 reduced [2Fe-2S]-[ferredoxin] + 2 H(+). It carries out the reaction dimethylallyl diphosphate + 2 oxidized [2Fe-2S]-[ferredoxin] + H2O = (2E)-4-hydroxy-3-methylbut-2-enyl diphosphate + 2 reduced [2Fe-2S]-[ferredoxin] + 2 H(+). It functions in the pathway isoprenoid biosynthesis; dimethylallyl diphosphate biosynthesis; dimethylallyl diphosphate from (2E)-4-hydroxy-3-methylbutenyl diphosphate: step 1/1. The protein operates within isoprenoid biosynthesis; isopentenyl diphosphate biosynthesis via DXP pathway; isopentenyl diphosphate from 1-deoxy-D-xylulose 5-phosphate: step 6/6. Functionally, catalyzes the conversion of 1-hydroxy-2-methyl-2-(E)-butenyl 4-diphosphate (HMBPP) into a mixture of isopentenyl diphosphate (IPP) and dimethylallyl diphosphate (DMAPP). Acts in the terminal step of the DOXP/MEP pathway for isoprenoid precursor biosynthesis. In Clostridium perfringens (strain 13 / Type A), this protein is 4-hydroxy-3-methylbut-2-enyl diphosphate reductase.